The following is a 291-amino-acid chain: Ribosomal RNA small subunit methyltransferase A (291 aa).

S-adenosyl-L-methionine-binding residues include histidine 37, leucine 39, glycine 64, glutamate 85, aspartate 110, and asparagine 131.

This sequence belongs to the class I-like SAM-binding methyltransferase superfamily. rRNA adenine N(6)-methyltransferase family. RsmA subfamily.

It is found in the cytoplasm. The catalysed reaction is adenosine(1518)/adenosine(1519) in 16S rRNA + 4 S-adenosyl-L-methionine = N(6)-dimethyladenosine(1518)/N(6)-dimethyladenosine(1519) in 16S rRNA + 4 S-adenosyl-L-homocysteine + 4 H(+). Functionally, specifically dimethylates two adjacent adenosines (A1518 and A1519) in the loop of a conserved hairpin near the 3'-end of 16S rRNA in the 30S particle. May play a critical role in biogenesis of 30S subunits. This is Ribosomal RNA small subunit methyltransferase A from Dehalococcoides mccartyi (strain CBDB1).